The primary structure comprises 408 residues: Flavohemoprotein (408 aa).

Residues 1–138 (MLSEKTIRIV…LADIFIGREG (138 aa)) enclose the Globin domain. Position 85 (H85) interacts with heme b. Catalysis depends on charge relay system residues Y95 and E137. The interval 149–408 (GGWNGTRTFV…FGPKEELVAV (260 aa)) is reductase. The region spanning 152-263 (NGTRTFVVTK…GPPCGEFTVD (112 aa)) is the FAD-binding FR-type domain. Residues Y190 and 205–208 (RNYS) contribute to the FAD site. 277–282 (GIGVTP) lines the NADP(+) pocket. 398 to 401 (FFGP) provides a ligand contact to FAD.

It belongs to the globin family. Two-domain flavohemoproteins subfamily. In the C-terminal section; belongs to the flavoprotein pyridine nucleotide cytochrome reductase family. Heme b serves as cofactor. The cofactor is FAD.

It carries out the reaction 2 nitric oxide + NADPH + 2 O2 = 2 nitrate + NADP(+) + H(+). The catalysed reaction is 2 nitric oxide + NADH + 2 O2 = 2 nitrate + NAD(+) + H(+). The protein is Flavohemoprotein of Rhodopirellula baltica (strain DSM 10527 / NCIMB 13988 / SH1).